Reading from the N-terminus, the 212-residue chain is Large ribosomal subunit protein uL3 (212 aa).

An N5-methylglutamine modification is found at Q153.

The protein belongs to the universal ribosomal protein uL3 family. Part of the 50S ribosomal subunit. Forms a cluster with proteins L14 and L19. Post-translationally, methylated by PrmB.

In terms of biological role, one of the primary rRNA binding proteins, it binds directly near the 3'-end of the 23S rRNA, where it nucleates assembly of the 50S subunit. The polypeptide is Large ribosomal subunit protein uL3 (Azoarcus sp. (strain BH72)).